A 210-amino-acid chain; its full sequence is Cytochrome c biogenesis ATP-binding export protein CcmA (210 aa).

The ABC transporter domain occupies 4-207 (LAVRDLAVAR…RQSRPAGFNE (204 aa)). 36-43 (GPNGIGKT) is an ATP binding site.

Belongs to the ABC transporter superfamily. CcmA exporter (TC 3.A.1.107) family. In terms of assembly, the complex is composed of two ATP-binding proteins (CcmA) and two transmembrane proteins (CcmB).

Its subcellular location is the cell inner membrane. The enzyme catalyses heme b(in) + ATP + H2O = heme b(out) + ADP + phosphate + H(+). Functionally, part of the ABC transporter complex CcmAB involved in the biogenesis of c-type cytochromes; once thought to export heme, this seems not to be the case, but its exact role is uncertain. Responsible for energy coupling to the transport system. The chain is Cytochrome c biogenesis ATP-binding export protein CcmA from Paracoccus denitrificans (strain Pd 1222).